We begin with the raw amino-acid sequence, 740 residues long: Ribosomal protein S6 kinase alpha-6 (740 aa).

A Protein kinase 1 domain is found at 67-326 (FELLKVLGQG…VEEIKRHTFF (260 aa)). ATP contacts are provided by residues 73-81 (LGQGSFGKV) and K99. D192 functions as the Proton acceptor in the catalytic mechanism. The region spanning 327–396 (STIDWNKLYR…VAPVSLEESK (70 aa)) is the AGC-kinase C-terminal domain. One can recognise a Protein kinase 2 domain in the interval 420-677 (YELKEDIGVG…AEQVLKHSWI (258 aa)). ATP-binding positions include 426 to 434 (IGVGSYSIC) and K449. Catalysis depends on D537, which acts as the Proton acceptor.

It belongs to the protein kinase superfamily. AGC Ser/Thr protein kinase family. S6 kinase subfamily. In terms of assembly, forms a complex with either ERK1 or ERK2 in quiescent cells. Transiently dissociates following mitogenic stimulation. Mg(2+) is required as a cofactor.

The catalysed reaction is L-seryl-[protein] + ATP = O-phospho-L-seryl-[protein] + ADP + H(+). It catalyses the reaction L-threonyl-[protein] + ATP = O-phospho-L-threonyl-[protein] + ADP + H(+). With respect to regulation, activated by multiple phosphorylations on threonine and serine residues. Functionally, serine/threonine kinase that may play a role in mediating the growth-factor and stress induced activation of the transcription factor CREB. The sequence is that of Ribosomal protein S6 kinase alpha-6 (rps6ka6) from Danio rerio (Zebrafish).